The following is a 326-amino-acid chain: tRNA-modifying protein YgfZ (326 aa).

Folate-binding residues include W27 and W189.

This sequence belongs to the tRNA-modifying YgfZ family.

Its subcellular location is the cytoplasm. Folate-binding protein involved in regulating the level of ATP-DnaA and in the modification of some tRNAs. It is probably a key factor in regulatory networks that act via tRNA modification, such as initiation of chromosomal replication. The polypeptide is tRNA-modifying protein YgfZ (Escherichia coli O45:K1 (strain S88 / ExPEC)).